The primary structure comprises 835 residues: Leucine--tRNA ligase (835 aa).

A 'HIGH' region motif is present at residues 42 to 52; sequence PYPSGRIHMGH. Positions 612–616 match the 'KMSKS' region motif; that stretch reads KMSKS. Position 615 (Lys615) interacts with ATP.

It belongs to the class-I aminoacyl-tRNA synthetase family.

Its subcellular location is the cytoplasm. The catalysed reaction is tRNA(Leu) + L-leucine + ATP = L-leucyl-tRNA(Leu) + AMP + diphosphate. This chain is Leucine--tRNA ligase, found in Rhizorhabdus wittichii (strain DSM 6014 / CCUG 31198 / JCM 15750 / NBRC 105917 / EY 4224 / RW1) (Sphingomonas wittichii).